The sequence spans 343 residues: Anthranilate phosphoribosyltransferase (343 aa).

Residues Gly-79, 82–83 (GD), Thr-87, 89–92 (NVST), 106–114 (KHGNRAASS), and Ser-118 contribute to the 5-phospho-alpha-D-ribose 1-diphosphate site. Gly-79 provides a ligand contact to anthranilate. Residue Ser-91 coordinates Mg(2+). Residue Asn-109 participates in anthranilate binding. Residue Arg-164 coordinates anthranilate. Asp-223 and Glu-224 together coordinate Mg(2+).

Belongs to the anthranilate phosphoribosyltransferase family. In terms of assembly, homodimer. It depends on Mg(2+) as a cofactor.

It catalyses the reaction N-(5-phospho-beta-D-ribosyl)anthranilate + diphosphate = 5-phospho-alpha-D-ribose 1-diphosphate + anthranilate. It participates in amino-acid biosynthesis; L-tryptophan biosynthesis; L-tryptophan from chorismate: step 2/5. Catalyzes the transfer of the phosphoribosyl group of 5-phosphorylribose-1-pyrophosphate (PRPP) to anthranilate to yield N-(5'-phosphoribosyl)-anthranilate (PRA). The protein is Anthranilate phosphoribosyltransferase of Metallosphaera sedula (strain ATCC 51363 / DSM 5348 / JCM 9185 / NBRC 15509 / TH2).